The chain runs to 270 residues: Coiled-coil domain-containing protein 3 (270 aa).

Positions 1–21 (MLRQLLLAALCLAGPPAPARA) are cleaved as a signal peptide. An N-linked (GlcNAc...) asparagine glycan is attached at N100. The stretch at 188-251 (SVQKALFEEE…NQKLSEKLAA (64 aa)) forms a coiled coil.

In terms of assembly, homodimer. In terms of tissue distribution, expressed in umbilical vein endothelial cells (HUVEC), and at lower levels in aortic smooth muscle cells (HASMC).

It localises to the secreted. Its function is as follows. Negatively regulates TNF-alpha-induced pro-inflammatory response in endothelial cells (ECs) via inhibition of TNF-alpha-induced NF-kappaB activation in ECs. Positively regulates lipid accumulation in adipose cells. The polypeptide is Coiled-coil domain-containing protein 3 (CCDC3) (Homo sapiens (Human)).